A 139-amino-acid chain; its full sequence is Aspartate 1-decarboxylase (139 aa).

S25 acts as the Schiff-base intermediate with substrate; via pyruvic acid in catalysis. S25 carries the post-translational modification Pyruvic acid (Ser). T57 contributes to the substrate binding site. Y58 serves as the catalytic Proton donor. 73–75 (GAA) is a binding site for substrate. The interval 116–139 (ELGEDPAHAPAGSGLKDPRHPEGE) is disordered.

This sequence belongs to the PanD family. Heterooctamer of four alpha and four beta subunits. Pyruvate is required as a cofactor. Post-translationally, is synthesized initially as an inactive proenzyme, which is activated by self-cleavage at a specific serine bond to produce a beta-subunit with a hydroxyl group at its C-terminus and an alpha-subunit with a pyruvoyl group at its N-terminus.

Its subcellular location is the cytoplasm. The catalysed reaction is L-aspartate + H(+) = beta-alanine + CO2. It participates in cofactor biosynthesis; (R)-pantothenate biosynthesis; beta-alanine from L-aspartate: step 1/1. In terms of biological role, catalyzes the pyruvoyl-dependent decarboxylation of aspartate to produce beta-alanine. The sequence is that of Aspartate 1-decarboxylase from Corynebacterium urealyticum (strain ATCC 43042 / DSM 7109).